The sequence spans 215 residues: uncharacterized protein (215 aa).

2 helical membrane-spanning segments follow: residues 40 to 60 (VLFP…FCSL) and 72 to 92 (LIWF…VGYL).

The protein resides in the mitochondrion membrane. This is an uncharacterized protein from Arabidopsis thaliana (Mouse-ear cress).